Here is a 368-residue protein sequence, read N- to C-terminus: 3-dehydroquinate synthase (368 aa).

NAD(+) is bound by residues 112-116 (GVVGD), 136-137 (TT), K149, K158, and 176-179 (FLDT). 3 residues coordinate Zn(2+): E191, H257, and H274.

It belongs to the sugar phosphate cyclases superfamily. Dehydroquinate synthase family. It depends on Co(2+) as a cofactor. Requires Zn(2+) as cofactor. NAD(+) is required as a cofactor.

The protein resides in the cytoplasm. The enzyme catalyses 7-phospho-2-dehydro-3-deoxy-D-arabino-heptonate = 3-dehydroquinate + phosphate. It functions in the pathway metabolic intermediate biosynthesis; chorismate biosynthesis; chorismate from D-erythrose 4-phosphate and phosphoenolpyruvate: step 2/7. Its function is as follows. Catalyzes the conversion of 3-deoxy-D-arabino-heptulosonate 7-phosphate (DAHP) to dehydroquinate (DHQ). This is 3-dehydroquinate synthase from Natranaerobius thermophilus (strain ATCC BAA-1301 / DSM 18059 / JW/NM-WN-LF).